Here is a 268-residue protein sequence, read N- to C-terminus: Gene 65 protein (268 aa).

The polypeptide is Gene 65 protein (65) (Mycobacterium (Mycobacteriophage L5)).